A 200-amino-acid chain; its full sequence is MIPTVIEQSARGERAFDIYSRLLRDRIIFLGTQVDDDIANLIVAQMLYLESEDPEKDIYLYINSPGGSVYAGMAIYDTMQHIQPDVSTICIGLAASMGAFLLAGGTKGKRIALPHARIMIHQPLGGAQGPATDIEIQAKEILFIKNSLNSLLAYHTGQPLERIERDTDRDNFMTPEQAKEYGLIDQVISKRPQPTLAAVS.

The Nucleophile role is filled by S96. Residue H121 is part of the active site.

Belongs to the peptidase S14 family. Fourteen ClpP subunits assemble into 2 heptameric rings which stack back to back to give a disk-like structure with a central cavity, resembling the structure of eukaryotic proteasomes.

The protein localises to the cytoplasm. It catalyses the reaction Hydrolysis of proteins to small peptides in the presence of ATP and magnesium. alpha-casein is the usual test substrate. In the absence of ATP, only oligopeptides shorter than five residues are hydrolyzed (such as succinyl-Leu-Tyr-|-NHMec, and Leu-Tyr-Leu-|-Tyr-Trp, in which cleavage of the -Tyr-|-Leu- and -Tyr-|-Trp bonds also occurs).. Cleaves peptides in various proteins in a process that requires ATP hydrolysis. Has a chymotrypsin-like activity. Plays a major role in the degradation of misfolded proteins. This chain is ATP-dependent Clp protease proteolytic subunit 2, found in Synechococcus sp. (strain JA-2-3B'a(2-13)) (Cyanobacteria bacterium Yellowstone B-Prime).